A 368-amino-acid polypeptide reads, in one-letter code: Flagellar P-ring protein (368 aa).

The signal sequence occupies residues 1 to 24 (MDKPMKRIFVVLVILLVLPQLALA).

Belongs to the FlgI family. In terms of assembly, the basal body constitutes a major portion of the flagellar organelle and consists of four rings (L,P,S, and M) mounted on a central rod.

It is found in the periplasm. The protein localises to the bacterial flagellum basal body. In terms of biological role, assembles around the rod to form the L-ring and probably protects the motor/basal body from shearing forces during rotation. In Geobacter sulfurreducens (strain ATCC 51573 / DSM 12127 / PCA), this protein is Flagellar P-ring protein.